The chain runs to 543 residues: Chaperonin GroEL (543 aa).

Residues 29–32, 86–90, G413, 477–479, and D493 contribute to the ATP site; these read TLGP, DGTTT, and DAL. The interval 524–543 is disordered; that stretch reads EKDKPEMPGGAPGMGMGGMY. Residues 533–543 are compositionally biased toward gly residues; the sequence is GAPGMGMGGMY.

It belongs to the chaperonin (HSP60) family. In terms of assembly, forms a cylinder of 14 subunits composed of two heptameric rings stacked back-to-back. Interacts with the co-chaperonin GroES.

It is found in the cytoplasm. It carries out the reaction ATP + H2O + a folded polypeptide = ADP + phosphate + an unfolded polypeptide.. In terms of biological role, together with its co-chaperonin GroES, plays an essential role in assisting protein folding. The GroEL-GroES system forms a nano-cage that allows encapsulation of the non-native substrate proteins and provides a physical environment optimized to promote and accelerate protein folding. This Clostridium acetobutylicum (strain ATCC 824 / DSM 792 / JCM 1419 / IAM 19013 / LMG 5710 / NBRC 13948 / NRRL B-527 / VKM B-1787 / 2291 / W) protein is Chaperonin GroEL.